The sequence spans 57 residues: Large ribosomal subunit protein eL20 (57 aa).

The protein belongs to the eukaryotic ribosomal protein eL20 family. As to quaternary structure, part of the 50S ribosomal subunit. Binds 23S rRNA.

In Natronomonas pharaonis (strain ATCC 35678 / DSM 2160 / CIP 103997 / JCM 8858 / NBRC 14720 / NCIMB 2260 / Gabara) (Halobacterium pharaonis), this protein is Large ribosomal subunit protein eL20.